A 485-amino-acid chain; its full sequence is MDLFQLTAHQLHQLLTKKEISALDITEAVYNRIEQVEDKVKSYLTLTREQAEIKARQVDQKIAAGESIGPLAGIPIAIKDNMCTQGIRTTCASKILYNFVPPYSATSVEKVYTADMVMVGKTNMDEFAMGSSTENSGFHLTHNPWDLDRVPGGSSGGSAAAVAAGEAIISLGSDTGGSIRQPAALCGVVGMKPTYGSVSRYGLVAYASSLDQIGPFTRDVTDMAHVLNVICGHDPMDSTSANLKQTDYTQFLTNDIKGMKIGVPREYMADGIDPQVREKIKAAIQKLTELGAHVEETSMPHTDYAMPAYYLIATAEASSNLARYDGVRYGLRVEEARDLVDMFMRSRSQGFGDEVKRRIMLGTYSLSAGYYDAYYLKALKVRTLIKQDFDRAFEKYDALLSPTSPTTAFKIGEMVNDPIQMYLQDVCTIPVNLAGIPAISLPCGLANNLPVGLQLMGKAFDEGTLLRIAYTLEQNTEYTRLRPEI.

Active-site charge relay system residues include Lys-79 and Ser-154. The active-site Acyl-ester intermediate is Ser-178.

The protein belongs to the amidase family. GatA subfamily. Heterotrimer of A, B and C subunits.

The catalysed reaction is L-glutamyl-tRNA(Gln) + L-glutamine + ATP + H2O = L-glutaminyl-tRNA(Gln) + L-glutamate + ADP + phosphate + H(+). Functionally, allows the formation of correctly charged Gln-tRNA(Gln) through the transamidation of misacylated Glu-tRNA(Gln) in organisms which lack glutaminyl-tRNA synthetase. The reaction takes place in the presence of glutamine and ATP through an activated gamma-phospho-Glu-tRNA(Gln). This Desulforamulus reducens (strain ATCC BAA-1160 / DSM 100696 / MI-1) (Desulfotomaculum reducens) protein is Glutamyl-tRNA(Gln) amidotransferase subunit A.